We begin with the raw amino-acid sequence, 550 residues long: MEKKMFCYQCQETAGNKGCILKGVCGKDFSTANLMDLLVFNLKGIAIIMTSMRHAGVKADYRKADKAIMESLFATITNANFDYSSIAKRVEKTFALKAELYSLALTQGIELPENEAVTMQGKPEEYDRLALSVGILRETDEDVRSLKELTIYGLKGLAAYAEHADRLGYVDEEINAFTERALHDVTMGLLSAEELTALVLETGSFGVKVMALLDKANTETYGNPEITEVNIGVGSRPGILISGHDLKDMEMLLEQTEGTGIDVYTHGEMLPANYYPKFKKYNHFFGNYGNAWWKQREEFETFNGPILFTTNCIVPPKANASYKDRVFTTNATGYPGFKYIESDEHGRKDFSEIIALAKTCQPPTEIESGTIIGGFAHHQVLSIADKVVEAVSSGAIRKFVVMSGCDGRQSGRNYYTEFAEALPSDTVILTSGCAKFRYNKLQLGNIGGIPRVLDAGQCNDSYSLAVIALKLKEVMGLDDINKLPIVYNIAWYEQKAVIVLLALLSLGVKNIHVGPTLPAFLSPNVAKVLIENFGIAGIGTVEEDIRTLIA.

[4Fe-4S] cluster contacts are provided by Cys7, Cys10, Cys19, and Cys25. Hybrid [4Fe-2O-2S] cluster is bound by residues His244, Glu268, Cys312, Cys405, Cys433, Cys458, Glu493, and Lys495. Cys405 carries the cysteine persulfide modification.

The protein belongs to the HCP family. It depends on [4Fe-4S] cluster as a cofactor. Requires hybrid [4Fe-2O-2S] cluster as cofactor.

It is found in the cytoplasm. The catalysed reaction is A + NH4(+) + H2O = hydroxylamine + AH2 + H(+). In terms of biological role, catalyzes the reduction of hydroxylamine to form NH(3) and H(2)O. In Porphyromonas gingivalis (strain ATCC 33277 / DSM 20709 / CIP 103683 / JCM 12257 / NCTC 11834 / 2561), this protein is Hydroxylamine reductase.